A 187-amino-acid chain; its full sequence is Phosphatidylethanolamine-binding protein 1 (187 aa).

2 positions are modified to phosphoserine: S6 and S13. T42 is modified (phosphothreonine). Phosphoserine is present on residues S52, S54, S98, and S153. The tract at residues 93-134 (KGNDISSGTVLSDYVGSGPPKGTGLHRYVWLVYEQDRPLKCD) is interaction with RAF1.

Belongs to the phosphatidylethanolamine-binding protein family. Has a tendency to form dimers by disulfide cross-linking. Interacts with RAF1 and this interaction is enhanced if RAF1 is phosphorylated on residues 'Ser-338', 'Ser-339', 'Tyr-340' and 'Tyr-341'. Interacts with ALOX15; in response to IL13/interleukin-13, prevents the interaction of PEBP1 with RAF1 to activate the ERK signaling cascade.

The protein resides in the cytoplasm. Its function is as follows. Binds ATP, opioids and phosphatidylethanolamine. Has lower affinity for phosphatidylinositol and phosphatidylcholine. Serine protease inhibitor which inhibits thrombin, neuropsin and chymotrypsin but not trypsin, tissue type plasminogen activator and elastase. Inhibits the kinase activity of RAF1 by inhibiting its activation and by dissociating the RAF1/MEK complex and acting as a competitive inhibitor of MEK phosphorylation. HCNP may be involved in the function of the presynaptic cholinergic neurons of the central nervous system. HCNP increases the production of choline acetyltransferase but not acetylcholinesterase. Seems to be mediated by a specific receptor. The protein is Phosphatidylethanolamine-binding protein 1 (PEBP1) of Pongo abelii (Sumatran orangutan).